The chain runs to 174 residues: ATP synthase subunit b 2 (174 aa).

The helical transmembrane segment at 27–47 threads the bilayer; sequence IFWLIITLVAIYLILTKVALP.

It belongs to the ATPase B chain family. In terms of assembly, F-type ATPases have 2 components, F(1) - the catalytic core - and F(0) - the membrane proton channel. F(1) has five subunits: alpha(3), beta(3), gamma(1), delta(1), epsilon(1). F(0) has three main subunits: a(1), b(2) and c(10-14). The alpha and beta chains form an alternating ring which encloses part of the gamma chain. F(1) is attached to F(0) by a central stalk formed by the gamma and epsilon chains, while a peripheral stalk is formed by the delta and b chains.

It localises to the cell inner membrane. Functionally, f(1)F(0) ATP synthase produces ATP from ADP in the presence of a proton or sodium gradient. F-type ATPases consist of two structural domains, F(1) containing the extramembraneous catalytic core and F(0) containing the membrane proton channel, linked together by a central stalk and a peripheral stalk. During catalysis, ATP synthesis in the catalytic domain of F(1) is coupled via a rotary mechanism of the central stalk subunits to proton translocation. In terms of biological role, component of the F(0) channel, it forms part of the peripheral stalk, linking F(1) to F(0). The b'-subunit is a diverged and duplicated form of b found in plants and photosynthetic bacteria. In Dinoroseobacter shibae (strain DSM 16493 / NCIMB 14021 / DFL 12), this protein is ATP synthase subunit b 2 (atpF2).